The chain runs to 260 residues: Snake venom serine proteinase 12 (260 aa).

A signal peptide spans 1 to 18 (MVLIRVLANLLILQLSYA). A propeptide spanning residues 19–24 (QKSSEL) is cleaved from the precursor. One can recognise a Peptidase S1 domain in the interval 25–251 (VIGGDECNIN…HLDWIQSIIA (227 aa)). 6 cysteine pairs are disulfide-bonded: Cys-31–Cys-163, Cys-50–Cys-66, Cys-98–Cys-258, Cys-142–Cys-212, Cys-174–Cys-191, and Cys-202–Cys-227. His-65 (charge relay system) is an active-site residue. Asn-103 carries an N-linked (GlcNAc...) asparagine glycan. Asp-110 serves as the catalytic Charge relay system. Ser-206 functions as the Charge relay system in the catalytic mechanism.

This sequence belongs to the peptidase S1 family. Snake venom subfamily. Monomer. In terms of tissue distribution, expressed by the venom gland.

It localises to the secreted. Its function is as follows. Snake venom serine protease that may act in the hemostasis system of the prey. This chain is Snake venom serine proteinase 12, found in Crotalus adamanteus (Eastern diamondback rattlesnake).